We begin with the raw amino-acid sequence, 376 residues long: uncharacterized protein (376 aa).

The helical transmembrane segment at 19 to 39 threads the bilayer; the sequence is FVLISLILLLNLGLLLGIQIY.

This sequence to S.pombe SpAC5H10.12c.

The protein localises to the cytoplasm. It localises to the nucleus. It is found in the membrane. This is an uncharacterized protein from Schizosaccharomyces pombe (strain 972 / ATCC 24843) (Fission yeast).